The sequence spans 193 residues: Protein D5 (193 aa).

Functionally, repression of replication initiation (possible). This chain is Protein D5 (ddpE), found in Dictyostelium discoideum (Social amoeba).